A 283-amino-acid chain; its full sequence is Phosphate import ATP-binding protein PstB 2 (283 aa).

Positions 36–278 (LQVKQFNFYY…PKKKQTEDYI (243 aa)) constitute an ABC transporter domain. 69–76 (GPSGCGKS) contributes to the ATP binding site.

The protein belongs to the ABC transporter superfamily. Phosphate importer (TC 3.A.1.7) family. In terms of assembly, the complex is composed of two ATP-binding proteins (PstB), two transmembrane proteins (PstC and PstA) and a solute-binding protein (PstS).

The protein localises to the cell inner membrane. It carries out the reaction phosphate(out) + ATP + H2O = ADP + 2 phosphate(in) + H(+). In terms of biological role, part of the ABC transporter complex PstSACB involved in phosphate import. Responsible for energy coupling to the transport system. In Nitrosococcus oceani (strain ATCC 19707 / BCRC 17464 / JCM 30415 / NCIMB 11848 / C-107), this protein is Phosphate import ATP-binding protein PstB 2.